The primary structure comprises 111 residues: UPF0060 membrane protein XAC3064 (111 aa).

The next 4 helical transmembrane spans lie at 8–28, 32–52, 64–84, and 91–111; these read LLLFAATALAELVGCYLPYLW, GGSVWLLLPTALSLAVFVWLL, AAYGGVYIASALLWLWWVDGV, and LLGAACCLLGMAVIMFSPRSA.

Belongs to the UPF0060 family.

The protein resides in the cell inner membrane. This is UPF0060 membrane protein XAC3064 from Xanthomonas axonopodis pv. citri (strain 306).